A 464-amino-acid polypeptide reads, in one-letter code: Centrosomal protein of 55 kDa (464 aa).

A compositionally biased stretch (basic and acidic residues) spans 1 to 11; the sequence is MSSRSTKDLIK. Positions 1-26 are disordered; the sequence is MSSRSTKDLIKSKWGSKPSNSKSETT. Coiled-coil stretches lie at residues 22 to 186, 238 to 337, and 374 to 403; these read KSET…QWLV, NDLL…FLYT, and QHQL…LHEF. The residue at position 96 (Ser96) is a Phosphoserine. An interaction with TSG101 region spans residues 157-236; that stretch reads PNCFNSSINN…GYLQEEKQKC (80 aa). The interaction with PDCD6IP stretch occupies residues 160-214; it reads FNSSINNIHEMEIQLKDALEKNQQWLVYDQQREVYVKGLLAKIFELEKKTETAAH. Positions 355 to 464 are required for localization to the interphase centrosome and to the midbody during cytokinesis; the sequence is QMQACTLDFE…LLVHVEYCSK (110 aa). Residues Ser425 and Ser428 each carry the phosphoserine; by CDK1 and MAPK1 modification. Position 430 is a phosphothreonine (Thr430). At Ser436 the chain carries Phosphoserine; by PLK1.

As to quaternary structure, homodimer. Interacts (phosphorylated on Ser-425 and Ser-428) with PLK1; the interaction is indirect via the MTMR3:MTMR4 heterooligomer, occurs during early mitosis, regulates the phosphorylation of CEP55 by PLK1 and its recruitment to the midbody where it can mediate cell abscission. Interacts with AKAP9/CG-NAP; the interaction occurs in interphase and is lost upon mitotic entry. Interacts with PCNT/Kendrin; the interaction occurs in interphase and is lost upon mitotic entry. Directly interacts with PDCD6IP; this interaction is required for PDCD6IP targeting to the midbody; CEP55 binds PDCD6IP in a 2:1 stoichiometry; PDCD6IP competes with TSG101 for the same binding site. Interacts with TSG101; TSG101 competes with PDCD6IP for the same binding site; interaction is required for cytokinesis but not for viral budding. Interacts with MVB12A, VPS37B, VPS37C and VPS28. There is a hierachy of phosphorylation, where both Ser-425 and Ser-428 are phosphorylated at the onset of mitosis, prior to Ser-436. Phosphorylation at Ser-425 and Ser-428 is required for dissociation from the centrosome at the G2/M boundary. Phosphorylation at the 3 sites, Ser-425, Ser-428 and Ser-436, is required for protein function at the final stages of cell division to complete cytokinesis successfully. Expressed in embryonic brain. Expressed in fetal brain ganglionic eminence, kidney tubules and multinucleate neurons in the temporal cortex. Expressed in adult brain, cerebellum, kidney tubules, intestine and muscles (at protein level). Widely expressed, mostly in proliferative tissues. Highly expressed in testis. Intermediate levels in adult and fetal thymus, as well as in various cancer cell lines. Low levels in different parts of the digestive tract, bone marrow, lymph nodes, placenta, fetal heart and fetal spleen. Hardly detected in brain.

Its subcellular location is the cytoplasm. It is found in the cytoskeleton. It localises to the microtubule organizing center. The protein localises to the centrosome. The protein resides in the centriole. Its subcellular location is the cleavage furrow. It is found in the midbody. It localises to the midbody ring. In terms of biological role, plays a role in mitotic exit and cytokinesis. Recruits PDCD6IP and TSG101 to midbody during cytokinesis. Required for successful completion of cytokinesis. Not required for microtubule nucleation. Plays a role in the development of the brain and kidney. The sequence is that of Centrosomal protein of 55 kDa from Homo sapiens (Human).